Reading from the N-terminus, the 217-residue chain is Pyrrolidone-carboxylate peptidase (217 aa).

Catalysis depends on residues Glu-78, Cys-141, and His-168.

It belongs to the peptidase C15 family. Homotetramer.

The protein resides in the cytoplasm. The enzyme catalyses Release of an N-terminal pyroglutamyl group from a polypeptide, the second amino acid generally not being Pro.. Its function is as follows. Removes 5-oxoproline from various penultimate amino acid residues except L-proline. This Treponema denticola (strain ATCC 35405 / DSM 14222 / CIP 103919 / JCM 8153 / KCTC 15104) protein is Pyrrolidone-carboxylate peptidase.